Here is a 529-residue protein sequence, read N- to C-terminus: Ell-associated factor Eaf (529 aa).

2 disordered regions span residues 155-235 and 253-529; these read AAGS…PMIT and ANIS…DDDD. The segment covering 167–186 has biased composition (polar residues); sequence ENSTMRISSKTKVSTGSRRN. Low complexity-rich tracts occupy residues 194–215, 256–265, 306–315, and 327–346; these read RNSPMQQSSPSRPVVSHRSPQS, SGSSTGSSSG, HQNQQQQQQN, and QQQHQQQMQQQQQQHQQQQQ. Serine 196 is modified (phosphoserine). A compositionally biased stretch (polar residues) spans 347–359; the sequence is RASFSHSNHSNSM. Residues 401–416 show a composition bias toward acidic residues; that stretch reads DSSDTDSGSDSDDSTD. 4 stretches are compositionally biased toward low complexity: residues 431-451, 469-480, 488-499, and 510-523; these read HQQQHHQMQQQHQQQQQHMHQ, QHQQQQQQPPQQ, QQQQQQQQQQQS, and NDLLQNDLQLSSNS.

The protein belongs to the EAF family.

It is found in the nucleus. Functionally, promotes transcriptional elongation by Su(Tpl)/ELL. Essential for development. In Drosophila grimshawi (Hawaiian fruit fly), this protein is Ell-associated factor Eaf.